Here is a 359-residue protein sequence, read N- to C-terminus: UbiA prenyltransferase domain-containing protein 1 homolog (359 aa).

The segment covering 1-16 has biased composition (polar residues); sequence MATSSQLLPNGNLSRN. Positions 1–23 are disordered; sequence MATSSQLLPNGNLSRNGKTKTED. Transmembrane regions (helical) follow at residues 67–89, 98–118, 148–168, 177–197, 200–220, 262–284, 289–311, and 335–355; these read ALRP…LAYR, LATF…GNVV, VVSL…LLAV, LALI…GIGF, IALG…LFAF, IVTL…LLFA, FFIF…PQAF, and FFFG…PTFG.

It belongs to the UbiA prenyltransferase family.

The protein resides in the mitochondrion membrane. It functions in the pathway quinol/quinone metabolism; menaquinone biosynthesis. Its function is as follows. Prenyltransferase that mediates the formation of menaquinone-4 (MK-4), a vitamin K2 isoform, thereby acting as a mitochondrial electron carrier. Mediates the conversion of phylloquinone (PK) into MK-4, probably by cleaving the side chain of phylloquinone (PK) to release 2-methyl-1,4-naphthoquinone (menadione; K3) and then prenylating it with geranylgeranyl pyrophosphate (GGPP) to form MK-4. MK-4 acts as a membrane electron carrier downstream of a electron transport chain complex, improving mitochondrial oxygen consumption. This Drosophila melanogaster (Fruit fly) protein is UbiA prenyltransferase domain-containing protein 1 homolog (heix).